Reading from the N-terminus, the 456-residue chain is MSAAASPRSLTLIGAGLAGCLLAILLSRRGWQITLYERRGDPRIKGYESGRSINLALAERGRHALRQAGAEDAVMAKAVMMRGRMIHPVSGEPQLQRYGRDDSEVIWSIHRAALNVTLLDLAEQAGARVHFYRRLHTVDFDAGYARFIDDRDDQPHEIHFQALVGSDGAGSALRAAMQRKAPVGEHIAFLDHSYKELEIPPRADGGFRIERNALHIWPRGRYMCIALPNDGGTFTVTLFLPNEGMPSFATTRSGDEALALFARDFPDALPLIPQLKEHWEEHPPGLLGTLTRERWHLDGRAVLLGDAAHAMVPFHGQGMNCAFEDCVALAEQLDAHSDLSEAFAAFEAARRDDAAAIQQMALENYLEMRDRVGDAQFLLQRALEQQLQARWPTRFVPHYTMVTFLRTRYAIALARSEIQREILLEATHGHTDLSRIDWVALETVVHARLEPLEGAH.

This sequence belongs to the aromatic-ring hydroxylase family. KMO subfamily. FAD is required as a cofactor.

It carries out the reaction L-kynurenine + NADPH + O2 + H(+) = 3-hydroxy-L-kynurenine + NADP(+) + H2O. It participates in cofactor biosynthesis; NAD(+) biosynthesis; quinolinate from L-kynurenine: step 1/3. In terms of biological role, catalyzes the hydroxylation of L-kynurenine (L-Kyn) to form 3-hydroxy-L-kynurenine (L-3OHKyn). Required for synthesis of quinolinic acid. The sequence is that of Kynurenine 3-monooxygenase from Xanthomonas campestris pv. campestris (strain 8004).